The sequence spans 132 residues: Protein KRTCAP2 homolog (132 aa).

A run of 4 helical transmembrane segments spans residues 1 to 21 (MAVP…LIFS), 35 to 55 (MATV…LTAV), 69 to 89 (AKLF…CGMV), and 92 to 109 (VCAT…YYIN).

The protein belongs to the KRTCAP2 family. In terms of assembly, component of the oligosaccharyltransferase (OST) complex.

It localises to the membrane. In terms of biological role, subunit of the oligosaccharyl transferase (OST) complex that catalyzes the initial transfer of a defined glycan (Glc(3)Man(9)GlcNAc(2) in eukaryotes) from the lipid carrier dolichol-pyrophosphate to an asparagine residue within an Asn-X-Ser/Thr consensus motif in nascent polypeptide chains, the first step in protein N-glycosylation. N-glycosylation occurs cotranslationally and the complex associates with the Sec61 complex at the channel-forming translocon complex that mediates protein translocation across the endoplasmic reticulum (ER). All subunits are required for a maximal enzyme activity. This chain is Protein KRTCAP2 homolog, found in Aedes aegypti (Yellowfever mosquito).